A 226-amino-acid polypeptide reads, in one-letter code: Eukaryotic translation initiation factor 3 subunit K (226 aa).

The PCI domain occupies 44–202; that stretch reads YSLEVNLCLL…IVLPQNEFNH (159 aa).

This sequence belongs to the eIF-3 subunit K family. As to quaternary structure, component of the eukaryotic translation initiation factor 3 (eIF-3) complex.

The protein resides in the cytoplasm. Component of the eukaryotic translation initiation factor 3 (eIF-3) complex, which is involved in protein synthesis of a specialized repertoire of mRNAs and, together with other initiation factors, stimulates binding of mRNA and methionyl-tRNAi to the 40S ribosome. The eIF-3 complex specifically targets and initiates translation of a subset of mRNAs involved in cell proliferation. This Arabidopsis thaliana (Mouse-ear cress) protein is Eukaryotic translation initiation factor 3 subunit K (TIF3K1).